A 205-amino-acid polypeptide reads, in one-letter code: Thymidylate kinase (205 aa).

10 to 17 serves as a coordination point for ATP; it reads GLEGAGKS.

It belongs to the thymidylate kinase family.

It catalyses the reaction dTMP + ATP = dTDP + ADP. Its function is as follows. Phosphorylation of dTMP to form dTDP in both de novo and salvage pathways of dTTP synthesis. The protein is Thymidylate kinase of Idiomarina loihiensis (strain ATCC BAA-735 / DSM 15497 / L2-TR).